Here is a 1891-residue protein sequence, read N- to C-terminus: TATA-binding protein-associated factor mot1 (1891 aa).

The stretch at 30 to 68 (PDELFNLLGRILPYLRSKSWDTRAAAAKAIGLIVANADT) is one HEAT 1 repeat. Disordered regions lie at residues 184–216 (FVASREHSIQGTSQPLASPIEPANGEESGLSKR), 241–283 (LSSR…LDRS), and 295–316 (FKGASVPENPLLQPESTEEGPN). Residues 264–275 (ENGEERNGDSKP) show a composition bias toward basic and acidic residues. HEAT repeat units follow at residues 473–511 (SKLMDGVLEAVMKGLGDYDDDVRAVSAATLVPIAEEFVK) and 569–606 (SSFGKLVPRLYPFLRHTITSVRSAVLRALMTFLQLEGE). A compositionally biased stretch (low complexity) spans 699-710 (SAAAPARSSPAS). The segment at 699–740 (SAAAPARSSPASNTPEGTKGRRRKSEKKEAPPPSAHNVDGHM) is disordered. HEAT repeat units follow at residues 957–996 (PKKPSHIIKGMMDSIKKEENAELQQRSATAITSLVEYYTT), 1139–1177 (YPWVVDLLPLVVKALQCNLSVIRYAAAKCFATICSVITV), 1181–1216 (TMLVEKVLPMINDALDVHHRQGAVECIYHLIHVMED), and 1219–1257 (LPYVIFLVVPVLGRMSDSDNEVRLLATTSFATLVKLVPL). The 174-residue stretch at 1316–1489 (AFLNRYNLHG…WSLFDFLMPG (174 aa)) folds into the Helicase ATP-binding domain. Residue 1329–1336 (DDMGLGKT) participates in ATP binding. The short motif at 1440–1443 (DEGH) is the DEAH box element. An HEAT 8 repeat occupies 1526 to 1565 (EALHKQVLPFLLRRLKEEVLNDLPPKIIQNYYCDPSELQR). Residues 1663 to 1813 (DLSGASYVSP…STVVNQQNAG (151 aa)) enclose the Helicase C-terminal domain.

This sequence belongs to the SNF2/RAD54 helicase family. Forms the NCT transcriptional regulatory complex with nctA and nctB.

The protein resides in the nucleus. Regulates transcription in association with TATA binding protein (TBP). Removes TBP from the TATA box via its C-terminal ATPase activity. Both transcription activation and repression require its ATPase activity. Part of the NCT transcriptional regulatory complex that acts as a key regulator of ergosterol biosynthesis and the azole exporter cdr1B. The NCT complex binds the promoters of genes linked to azole susceptibility, and especially represses the expression of cdr1B transporter. The chain is TATA-binding protein-associated factor mot1 from Aspergillus fumigatus (strain ATCC MYA-4609 / CBS 101355 / FGSC A1100 / Af293) (Neosartorya fumigata).